Consider the following 536-residue polypeptide: Lysosomal acid glucosylceramidase (536 aa).

A signal peptide spans 1–39; that stretch reads MELSSPSREEYPMPRGRVGIMAASLMGLLLLHTVSWVSG. Intrachain disulfides connect Cys43–Cys55 and Cys57–Cys62. N-linked (GlcNAc...) asparagine glycans are attached at residues Asn58, Asn98, Asn185, and Asn208. Glu274 serves as the catalytic Proton donor. A glycan (N-linked (GlcNAc...) asparagine) is linked at Asn309. Glu379 (nucleophile) is an active-site residue. Asn501 carries N-linked (GlcNAc...) asparagine glycosylation.

Belongs to the glycosyl hydrolase 30 family. In terms of assembly, interacts with saposin-C. Interacts with SCARB2. Interacts with TCP1. Interacts with GRN; this interaction prevents aggregation of GBA1-SCARB2 complex via interaction with HSPA1A upon stress.

The protein resides in the lysosome membrane. The catalysed reaction is a beta-D-glucosyl-(1&lt;-&gt;1')-N-acylsphing-4-enine + H2O = an N-acylsphing-4-enine + D-glucose. The enzyme catalyses a beta-D-galactosyl-(1&lt;-&gt;1')-N-acylsphing-4-enine + H2O = an N-acylsphing-4-enine + D-galactose. It catalyses the reaction cholesteryl 3-beta-D-glucoside + H2O = cholesterol + D-glucose. It carries out the reaction a beta-D-glucosyl-(1&lt;-&gt;1')-N-acylsphing-4-enine + cholesterol = cholesteryl 3-beta-D-glucoside + an N-acylsphing-4-enine. The catalysed reaction is beta-D-glucosyl-N-(9Z-octadecenoyl)-sphing-4E-enine + cholesterol = N-(9Z-octadecenoyl)-sphing-4-enine + cholesteryl 3-beta-D-glucoside. The enzyme catalyses beta-D-glucosyl-N-octanoylsphing-4E-enine + cholesterol = N-octanoylsphing-4-enine + cholesteryl 3-beta-D-glucoside. It catalyses the reaction beta-D-glucosyl-N-dodecanoylsphing-4-enine + cholesterol = N-dodecanoylsphing-4-enine + cholesteryl 3-beta-D-glucoside. It carries out the reaction beta-D-glucosyl-(1&lt;-&gt;1)-N-octadecanoylsphing-4-enine + cholesterol = N-octadecanoylsphing-4-enine + cholesteryl 3-beta-D-glucoside. The catalysed reaction is beta-D-glucosyl-(1&lt;-&gt;1')-N-(15Z-tetracosenoyl)-sphing-4-enine + cholesterol = N-(15Z-tetracosenoyl)-sphing-4-enine + cholesteryl 3-beta-D-glucoside. The enzyme catalyses a beta-D-galactosyl-(1&lt;-&gt;1')-N-acylsphing-4-enine + cholesterol = cholesteryl 3-beta-D-galactoside + an N-acylsphing-4-enine. It catalyses the reaction 1-(beta-D-galactosyl)-N-dodecanoylsphing-4-enine + cholesterol = cholesteryl 3-beta-D-galactoside + N-dodecanoylsphing-4-enine. It carries out the reaction a beta-D-xylosyl-(1&lt;-&gt;1')-N-acylsphing-4-enine + cholesterol = cholesteryl 3-beta-D-xyloside + an N-acylsphing-4-enine. The catalysed reaction is beta-D-xylosyl-(1&lt;-&gt;1')-N-(9Z-octadecenoyl)-sphing-4-enine + cholesterol = cholesteryl 3-beta-D-xyloside + N-(9Z-octadecenoyl)-sphing-4-enine. It functions in the pathway steroid metabolism; cholesterol metabolism. It participates in sphingolipid metabolism. Glucosylceramidase that catalyzes, within the lysosomal compartment, the hydrolysis of glucosylceramides/GlcCers (such as beta-D-glucosyl-(1&lt;-&gt;1')-N-acylsphing-4-enine) into free ceramides (such as N-acylsphing-4-enine) and glucose. Plays a central role in the degradation of complex lipids and the turnover of cellular membranes. Through the production of ceramides, participates in the PKC-activated salvage pathway of ceramide formation. Catalyzes the glucosylation of cholesterol, through a transglucosylation reaction where glucose is transferred from GlcCer to cholesterol. GlcCer containing mono-unsaturated fatty acids (such as beta-D-glucosyl-N-(9Z-octadecenoyl)-sphing-4-enine) are preferred as glucose donors for cholesterol glucosylation when compared with GlcCer containing same chain length of saturated fatty acids (such as beta-D-glucosyl-N-octadecanoyl-sphing-4-enine). Under specific conditions, may alternatively catalyze the reverse reaction, transferring glucose from cholesteryl 3-beta-D-glucoside to ceramide. Can also hydrolyze cholesteryl 3-beta-D-glucoside producing glucose and cholesterol. Catalyzes the hydrolysis of galactosylceramides/GalCers (such as beta-D-galactosyl-(1&lt;-&gt;1')-N-acylsphing-4-enine), as well as the transfer of galactose between GalCers and cholesterol in vitro, but with lower activity than with GlcCers. Contrary to GlcCer and GalCer, xylosylceramide/XylCer (such as beta-D-xyosyl-(1&lt;-&gt;1')-N-acylsphing-4-enine) is not a good substrate for hydrolysis, however it is a good xylose donor for transxylosylation activity to form cholesteryl 3-beta-D-xyloside. The sequence is that of Lysosomal acid glucosylceramidase (GBA1) from Bos taurus (Bovine).